We begin with the raw amino-acid sequence, 276 residues long: Undecaprenyl-diphosphatase 2 (276 aa).

Transmembrane regions (helical) follow at residues 3-23 (IWDI…EYAP), 48-68 (AANT…AFVF), 92-112 (LSIA…FLFE), 119-139 (LFSV…MLAA), 196-216 (ADFT…LSLI), 225-245 (DLLP…LFVV), and 255-275 (IKLV…FILF).

The protein belongs to the UppP family.

The protein resides in the cell membrane. It catalyses the reaction di-trans,octa-cis-undecaprenyl diphosphate + H2O = di-trans,octa-cis-undecaprenyl phosphate + phosphate + H(+). In terms of biological role, catalyzes the dephosphorylation of undecaprenyl diphosphate (UPP). Confers resistance to bacitracin. This is Undecaprenyl-diphosphatase 2 from Bacillus licheniformis (strain ATCC 14580 / DSM 13 / JCM 2505 / CCUG 7422 / NBRC 12200 / NCIMB 9375 / NCTC 10341 / NRRL NRS-1264 / Gibson 46).